Consider the following 257-residue polypeptide: UPF0246 protein Ping_3037 (257 aa).

This sequence belongs to the UPF0246 family.

This chain is UPF0246 protein Ping_3037, found in Psychromonas ingrahamii (strain DSM 17664 / CCUG 51855 / 37).